A 357-amino-acid chain; its full sequence is MSLTRLLIRDFRNIENADLALSPGFNFLVGANGSGKTSVLEAIYTLGHGRAFRSLQIGRVIRHEQESFVLHGRLQGEERETAIGLTKDKLGDSKVRIDGTDGHKVAELAHLMPMQLITPEGFTLLNGGPKYRRAFLDWGCFHNEVGFFTAWSNLKRLLKQRNAALRQVSRYEQLRPWDKELIPLAEQISTWRAEYSAGIAQDMADTCQQFLPEFSLTFSFQRGWEKETDYAEVLERSFERDRMLTYTAHGPHKADFRIRADGAPVEDTLSRGQLKLLMCALRLAQGEFLTRESGRRCLYLIDDFASELDDARRGLLASRLKATQSQVFVSAISAEHVLDMSDKNSKMFTVEKGKITD.

Position 30 to 37 (30 to 37 (GANGSGKT)) interacts with ATP.

Belongs to the RecF family.

It is found in the cytoplasm. In terms of biological role, the RecF protein is involved in DNA metabolism; it is required for DNA replication and normal SOS inducibility. RecF binds preferentially to single-stranded, linear DNA. It also seems to bind ATP. The sequence is that of DNA replication and repair protein RecF from Citrobacter koseri (strain ATCC BAA-895 / CDC 4225-83 / SGSC4696).